We begin with the raw amino-acid sequence, 190 residues long: Ribosome hibernation promotion factor (190 aa).

It belongs to the HPF/YfiA ribosome-associated protein family. Long HPF subfamily. In terms of assembly, interacts with 100S ribosomes.

Its subcellular location is the cytoplasm. Functionally, required for dimerization of active 70S ribosomes into 100S ribosomes in stationary phase; 100S ribosomes are translationally inactive and sometimes present during exponential growth. This is Ribosome hibernation promotion factor from Staphylococcus aureus (strain COL).